The chain runs to 213 residues: Thiopurine S-methyltransferase (213 aa).

4 residues coordinate S-adenosyl-L-methionine: Trp-10, Leu-45, Glu-66, and Arg-121.

This sequence belongs to the class I-like SAM-binding methyltransferase superfamily. TPMT family.

The protein resides in the cytoplasm. It carries out the reaction S-adenosyl-L-methionine + a thiopurine = S-adenosyl-L-homocysteine + a thiopurine S-methylether.. This is Thiopurine S-methyltransferase from Aliivibrio salmonicida (strain LFI1238) (Vibrio salmonicida (strain LFI1238)).